The sequence spans 70 residues: Small ribosomal subunit protein bS21 (70 aa).

It belongs to the bacterial ribosomal protein bS21 family.

The polypeptide is Small ribosomal subunit protein bS21 (Azoarcus sp. (strain BH72)).